The chain runs to 299 residues: Oxygen-dependent coproporphyrinogen-III oxidase (299 aa).

Ser-92 serves as a coordination point for substrate. Residues His-96 and His-106 each coordinate a divalent metal cation. His-106 acts as the Proton donor in catalysis. Residue 108–110 participates in substrate binding; that stretch reads NVR. 2 residues coordinate a divalent metal cation: His-145 and His-175. The interval 239-274 is important for dimerization; it reads YVEFNLVYDRGTLFGLQSGGRAESILMSLPPQVRWE. 257-259 provides a ligand contact to substrate; sequence GGR.

The protein belongs to the aerobic coproporphyrinogen-III oxidase family. As to quaternary structure, homodimer. A divalent metal cation is required as a cofactor.

The protein localises to the cytoplasm. It catalyses the reaction coproporphyrinogen III + O2 + 2 H(+) = protoporphyrinogen IX + 2 CO2 + 2 H2O. It participates in porphyrin-containing compound metabolism; protoporphyrin-IX biosynthesis; protoporphyrinogen-IX from coproporphyrinogen-III (O2 route): step 1/1. Its function is as follows. Involved in the heme biosynthesis. Catalyzes the aerobic oxidative decarboxylation of propionate groups of rings A and B of coproporphyrinogen-III to yield the vinyl groups in protoporphyrinogen-IX. The protein is Oxygen-dependent coproporphyrinogen-III oxidase of Xanthomonas campestris pv. campestris (strain B100).